A 643-amino-acid polypeptide reads, in one-letter code: Macrolide export ATP-binding/permease protein MacB (643 aa).

Residues 4–242 (IEIKELNRYF…VNNQSKAKSR (239 aa)) form the ABC transporter domain. Position 40-47 (40-47 (GQSGSGKS)) interacts with ATP. Transmembrane regions (helical) follow at residues 269–289 (LLTM…VALG), 523–543 (IAFI…LVSV), 572–592 (ILIC…IGGI), and 603–623 (VFST…GVIF).

Belongs to the ABC transporter superfamily. Macrolide exporter (TC 3.A.1.122) family. Homodimer. Part of the tripartite efflux system MacAB-TolC, which is composed of an inner membrane transporter, MacB, a periplasmic membrane fusion protein, MacA, and an outer membrane component, TolC. The complex forms a large protein conduit and can translocate molecules across both the inner and outer membranes. Interacts with MacA.

Its subcellular location is the cell inner membrane. Its function is as follows. Part of the tripartite efflux system MacAB-TolC. MacB is a non-canonical ABC transporter that contains transmembrane domains (TMD), which form a pore in the inner membrane, and an ATP-binding domain (NBD), which is responsible for energy generation. Confers resistance against macrolides. This chain is Macrolide export ATP-binding/permease protein MacB, found in Mannheimia succiniciproducens (strain KCTC 0769BP / MBEL55E).